A 156-amino-acid polypeptide reads, in one-letter code: Ribosome-binding factor A (156 aa).

A disordered region spans residues 124 to 156 (TRAEYAGEAQPYRLEEEPEGSGDEVPPPGGDQR).

The protein belongs to the RbfA family. Monomer. Binds 30S ribosomal subunits, but not 50S ribosomal subunits or 70S ribosomes.

The protein resides in the cytoplasm. In terms of biological role, one of several proteins that assist in the late maturation steps of the functional core of the 30S ribosomal subunit. Associates with free 30S ribosomal subunits (but not with 30S subunits that are part of 70S ribosomes or polysomes). Required for efficient processing of 16S rRNA. May interact with the 5'-terminal helix region of 16S rRNA. This chain is Ribosome-binding factor A, found in Salinispora tropica (strain ATCC BAA-916 / DSM 44818 / JCM 13857 / NBRC 105044 / CNB-440).